Consider the following 274-residue polypeptide: Urease accessory protein UreD 2 (274 aa).

This sequence belongs to the UreD family. In terms of assembly, ureD, UreF and UreG form a complex that acts as a GTP-hydrolysis-dependent molecular chaperone, activating the urease apoprotein by helping to assemble the nickel containing metallocenter of UreC. The UreE protein probably delivers the nickel.

The protein localises to the cytoplasm. Required for maturation of urease via the functional incorporation of the urease nickel metallocenter. In Brucella anthropi (strain ATCC 49188 / DSM 6882 / CCUG 24695 / JCM 21032 / LMG 3331 / NBRC 15819 / NCTC 12168 / Alc 37) (Ochrobactrum anthropi), this protein is Urease accessory protein UreD 2.